We begin with the raw amino-acid sequence, 672 residues long: DNA ligase (672 aa).

NAD(+) is bound by residues 34–38 (DSVYD), 83–84 (SL), and Glu-113. Lys-115 functions as the N6-AMP-lysine intermediate in the catalytic mechanism. Residues Arg-136, Glu-170, Lys-286, and Lys-310 each coordinate NAD(+). Zn(2+)-binding residues include Cys-404, Cys-407, Cys-422, and Cys-427. Residues 592-672 (STDSSFNGLR…EFIQQMEEES (81 aa)) enclose the BRCT domain.

The protein belongs to the NAD-dependent DNA ligase family. LigA subfamily. The cofactor is Mg(2+). Requires Mn(2+) as cofactor.

It carries out the reaction NAD(+) + (deoxyribonucleotide)n-3'-hydroxyl + 5'-phospho-(deoxyribonucleotide)m = (deoxyribonucleotide)n+m + AMP + beta-nicotinamide D-nucleotide.. Functionally, DNA ligase that catalyzes the formation of phosphodiester linkages between 5'-phosphoryl and 3'-hydroxyl groups in double-stranded DNA using NAD as a coenzyme and as the energy source for the reaction. It is essential for DNA replication and repair of damaged DNA. The protein is DNA ligase of Ligilactobacillus salivarius (strain UCC118) (Lactobacillus salivarius).